We begin with the raw amino-acid sequence, 821 residues long: Protein EFR3 homolog A (821 aa).

S360, S363, S422, and S694 each carry phosphoserine.

It belongs to the EFR3 family. As to quaternary structure, component of a phosphatidylinositol 4-kinase (PI4K) complex, composed of PI4KA, EFR3 (EFR3A or EFR3B), TTC7 (TTC7A or TTC7B) and HYCC (HYCC1 or HYCC2). Palmitoylated at its N-terminus, anchoring the protein to the plasma membrane.

The protein localises to the cell membrane. The protein resides in the cytoplasm. Its subcellular location is the cytosol. In terms of biological role, component of a complex required to localize phosphatidylinositol 4-kinase (PI4K) to the plasma membrane. The complex acts as a regulator of phosphatidylinositol 4-phosphate (PtdIns(4)P) synthesis. In the complex, EFR3A probably acts as the membrane-anchoring component. Also involved in responsiveness to G-protein-coupled receptors; it is however unclear whether this role is direct or indirect. The chain is Protein EFR3 homolog A from Homo sapiens (Human).